The chain runs to 113 residues: uncharacterized protein (113 aa).

The 55-residue stretch at 16–70 folds into the HTH cro/C1-type domain; that stretch reads LYEYLEPLDLKINELAELLHVHRNSVSALINNNRKLTTEMAFRLAKVFDTTVDFW. Residues 27–46 constitute a DNA-binding region (H-T-H motif); that stretch reads INELAELLHVHRNSVSALIN.

This sequence belongs to the VapA/VapI family.

This is an uncharacterized protein from Escherichia coli O6:H1 (strain CFT073 / ATCC 700928 / UPEC).